The chain runs to 63 residues: Large ribosomal subunit protein bL28 (63 aa).

Belongs to the bacterial ribosomal protein bL28 family.

The sequence is that of Large ribosomal subunit protein bL28 from Mycoplasmopsis synoviae (strain 53) (Mycoplasma synoviae).